Consider the following 509-residue polypeptide: 2,3-bisphosphoglycerate-independent phosphoglycerate mutase (509 aa).

Mn(2+) is bound by residues Asp-13 and Ser-63. The Phosphoserine intermediate role is filled by Ser-63. Residues His-124, 154-155 (RD), Arg-186, Arg-192, 261-264 (RPDR), and Lys-335 each bind substrate. Mn(2+) is bound by residues Asp-400, His-404, Asp-441, His-442, and His-459.

The protein belongs to the BPG-independent phosphoglycerate mutase family. Monomer. The cofactor is Mn(2+).

It carries out the reaction (2R)-2-phosphoglycerate = (2R)-3-phosphoglycerate. It participates in carbohydrate degradation; glycolysis; pyruvate from D-glyceraldehyde 3-phosphate: step 3/5. In terms of biological role, catalyzes the interconversion of 2-phosphoglycerate and 3-phosphoglycerate. The protein is 2,3-bisphosphoglycerate-independent phosphoglycerate mutase of Desulforudis audaxviator (strain MP104C).